Consider the following 378-residue polypeptide: Protein SLG1 (378 aa).

An N-terminal signal peptide occupies residues 1–21 (MRPNKTSLLLALLSILSQANA). The WSC domain occupies 22 to 110 (YEYVNCFSSL…EDAYSVYQLD (89 aa)). The Extracellular segment spans residues 22–264 (YEYVNCFSSL…THKKKANVGA (243 aa)). Asparagine 65 is a glycosylation site (N-linked (GlcNAc...) asparagine). Disordered stretches follow at residues 115-201 (SNSI…TSST) and 236-256 (QNSGSATGTAGSDSTSGSKTH). Positions 236-253 (QNSGSATGTAGSDSTSGS) are enriched in low complexity. Residues 265-285 (IVGGVVGGVVGAVAIALCILL) traverse the membrane as a helical segment. Residues 286–378 (IVRHINMKRE…LTVVNPDEAD (93 aa)) are Cytoplasmic-facing. The tract at residues 318-378 (ASSFSSNHGP…LTVVNPDEAD (61 aa)) is disordered. The span at 319-331 (SSFSSNHGPSSGS) shows a compositional bias: low complexity. Phosphoserine is present on residues serine 331 and serine 353.

Post-translationally, glycosylated. Phosphorylated. Phosphorylation serves a negative regulatory role.

It localises to the cell membrane. Its function is as follows. Plays a role during G1 to regulate entering or exiting the cell cycle. Involved in stress responses. Has a role in cell wall integrity signaling. Activates ROM1 or ROM2 catalyzed guanine nucleotide exchange toward RHO1. Important regulator of the actin cytoskeleton rearrangements in conditions of cell wall expansion and membrane stretching. Specifically required for the actin reorganization induced by hypo-osmotic shock. Multicopy suppressor of 1,3-beta-glucan synthase (GS). Activates GS upstream of RHO1. Acts positively on the PKC1-MAPK pathway. Activates transiently SLT2 during alkaline stress, which leads to an increase in the expression of several specific genes. In Saccharomyces cerevisiae (strain ATCC 204508 / S288c) (Baker's yeast), this protein is Protein SLG1 (SLG1).